We begin with the raw amino-acid sequence, 387 residues long: Succinate--CoA ligase [ADP-forming] subunit beta (387 aa).

Residues 9–244 form the ATP-grasp domain; sequence KRLLAEEGVP…STQQDGREIT (236 aa). ATP-binding positions include Lys46, 53-55, Glu99, Ser102, and Glu107; that span reads GRG. Residues Asn199 and Asp213 each coordinate Mg(2+). Substrate contacts are provided by residues Asn264 and 321-323; that span reads GIT.

Belongs to the succinate/malate CoA ligase beta subunit family. In terms of assembly, heterotetramer of two alpha and two beta subunits. Mg(2+) is required as a cofactor.

The enzyme catalyses succinate + ATP + CoA = succinyl-CoA + ADP + phosphate. It catalyses the reaction GTP + succinate + CoA = succinyl-CoA + GDP + phosphate. The protein operates within carbohydrate metabolism; tricarboxylic acid cycle; succinate from succinyl-CoA (ligase route): step 1/1. Succinyl-CoA synthetase functions in the citric acid cycle (TCA), coupling the hydrolysis of succinyl-CoA to the synthesis of either ATP or GTP and thus represents the only step of substrate-level phosphorylation in the TCA. The beta subunit provides nucleotide specificity of the enzyme and binds the substrate succinate, while the binding sites for coenzyme A and phosphate are found in the alpha subunit. The chain is Succinate--CoA ligase [ADP-forming] subunit beta from Acidithiobacillus ferrooxidans (strain ATCC 23270 / DSM 14882 / CIP 104768 / NCIMB 8455) (Ferrobacillus ferrooxidans (strain ATCC 23270)).